The following is a 362-amino-acid chain: Glutamate 5-kinase (362 aa).

Residue lysine 3 participates in ATP binding. Residues serine 43, aspartate 128, and asparagine 140 each contribute to the substrate site. Residues threonine 160–aspartate 161 and threonine 202–lysine 208 contribute to the ATP site. Residues alanine 267–serine 348 enclose the PUA domain.

This sequence belongs to the glutamate 5-kinase family.

The protein resides in the cytoplasm. The catalysed reaction is L-glutamate + ATP = L-glutamyl 5-phosphate + ADP. The protein operates within amino-acid biosynthesis; L-proline biosynthesis; L-glutamate 5-semialdehyde from L-glutamate: step 1/2. Functionally, catalyzes the transfer of a phosphate group to glutamate to form L-glutamate 5-phosphate. This is Glutamate 5-kinase from Xanthomonas oryzae pv. oryzae (strain KACC10331 / KXO85).